The following is a 1416-amino-acid chain: Tiny macrocysts protein B (1416 aa).

A run of 8 helical transmembrane segments spans residues Ile47–His67, Phe93–Phe113, Phe140–Leu160, Ala185–Phe205, Val231–Pro251, Leu253–Leu273, Ser285–Asn305, and Ile315–Phe335. Positions Leu356–Ser372 are enriched in basic and acidic residues. 2 disordered regions span residues Leu356–Lys377 and Ile662–Lys691. A run of 2 helical transmembrane segments spans residues Trp706–Phe726 and Ala953–Phe973. Disordered regions lie at residues Arg1018–Met1103 and Asn1119–Thr1144. Acidic residues predominate over residues Thr1024 to Asn1039. Low complexity-rich tracts occupy residues Asn1048 to Asn1062 and Ser1083 to Ser1094. Positions Gln1123 to Thr1144 are enriched in basic and acidic residues. Helical transmembrane passes span Ile1179–Val1199, Trp1325–Phe1345, and Val1358–Phe1378.

Its subcellular location is the membrane. Regulator of the cAMP signaling pathway specific to sexual development. Controls the levels of external cAMP by regulating the expression of phosphodiesterase pdsA and its inhibitor pdiA. This Dictyostelium discoideum (Social amoeba) protein is Tiny macrocysts protein B (tmcB).